A 505-amino-acid chain; its full sequence is Prenylcysteine oxidase 1 (505 aa).

The signal sequence occupies residues 1–28; sequence MGRFAAALVGSLFWLGLLLCGLGSLASA. Asn196, Asn323, and Asn353 each carry an N-linked (GlcNAc...) asparagine glycan.

The protein belongs to the prenylcysteine oxidase family. Requires FAD as cofactor. Highly expressed in the liver, kidney, heart and brain.

Its subcellular location is the lysosome. It catalyses the reaction an S-polyprenyl-L-cysteine + O2 + H2O = a polyprenal + L-cysteine + H2O2. It carries out the reaction S-(2E,6E)-farnesyl-L-cysteine + O2 + H2O = (2E,6E)-farnesal + L-cysteine + H2O2. The catalysed reaction is [(2E,6E,10E)-geranylgeranyl]-L-cysteine + O2 + H2O = (2E,6E,10E)-geranylgeranial + L-cysteine + H2O2. In terms of biological role, prenylcysteine oxidase that cleaves the thioether bond of prenyl-L-cysteines, such as farnesylcysteine and geranylgeranylcysteine. Only active against free prenylcysteines and not prenylcysteine residues within prenylated proteins or peptides. Involved in the final step in the degradation of prenylated proteins, by degrading prenylcysteines after the protein has been degraded. The polypeptide is Prenylcysteine oxidase 1 (Mus musculus (Mouse)).